A 240-amino-acid polypeptide reads, in one-letter code: Putative protein FAM10A4 (240 aa).

The tract at residues 38-94 is disordered; it reads MGGTATQKAKSEENTKEEKPDSKVEEDLKADEPSSEESDLEIDKEGVIEPDTDAPQE. Basic and acidic residues predominate over residues 46 to 69; the sequence is AKSEENTKEEKPDSKVEEDLKADE. Residues 85-94 show a composition bias toward acidic residues; sequence IEPDTDAPQE. TPR repeat units lie at residues 110–143, 145–177, and 179–211; these read ANDK…NPRL, ILYA…NPDS, and QPYK…DYDE. Positions 220-240 are disordered; that stretch reads VQPRAQKIAEHQRKYERKREE. Over residues 226–240 the composition is skewed to basic and acidic residues; sequence KIAEHQRKYERKREE.

This sequence belongs to the FAM10 family. Highly expressed in bone marrow and weakly in placenta, pancreas, heart and HeLa cell line.

The protein localises to the cytoplasm. In Homo sapiens (Human), this protein is Putative protein FAM10A4 (ST13P4).